A 382-amino-acid polypeptide reads, in one-letter code: MDNLFTFLHEIEDRYARTIFNFHLISCDEIGDIYGLMKERISSEDMFDNIVYNKDIHPAIKKLVYCDIQLTKHIINQNTYPVFNDSSQVKCCHYFDINSNNSNISSRTVEIFESEKSSLVSYIKTTNKKRKVNYGEIKKTVHGGTNANYFSGKKSDEYLSTTVRSNINQPWIKTISKRMRVDIINHSIVTRGKSSILQTIEIIFTNRTCVKIFKDSTMHIILSKDKDEKGCINMIDKLFYVYYNLFLLFEDIIQNDYFKEVANVVNHVLMATALDEKLFLIKKMAEHDVYGVSNFKIGMFNLTFIKSLDHTVFPSLLDEDSKIKFFKGKKLNIVALRSLEDCTNYVTKSENMIEMMKERSTILNSIDIETESVDRLKELLLK.

The protein belongs to the orthopoxvirus OPG150 family. In terms of assembly, heterodimerizes with protein A8 to form the virus intermediate transcription factor (VITF)-3.

In terms of biological role, acts with RNA polymerase to initiate transcription from intermediate gene promoters. The chain is Intermediate transcription factor 3 large subunit (OPG150) from Cynomys gunnisoni (Gunnison's prairie dog).